The chain runs to 108 residues: MEAKTFAFLEIAMFIALGIQTFVAVTDAAGKDDEHFSVDYCGMNCTQQEDGSWTACSGRNGECRCYHESGKRSGLCLSTTYIDFSEYGNLSDSDIAAASPRLSMKESH.

Residues 1-28 (MEAKTFAFLEIAMFIALGIQTFVAVTDA) form the signal peptide. Cystine bridges form between Cys-41–Cys-63, Cys-45–Cys-65, and Cys-56–Cys-76. Asn-44 is a glycosylation site (N-linked (GlcNAc...) asparagine). N-linked (GlcNAc...) asparagine glycosylation occurs at Asn-89.

It localises to the secreted. Functionally, salivary chemokine-binding protein which binds to host chemokines CXCL1, CXCL2, CXCL3, CXCL5 and CXCL8. This is Evasin P1127 from Ixodes ricinus (Common tick).